A 432-amino-acid chain; its full sequence is Lipoyl synthase, mitochondrial (432 aa).

Low complexity predominate over residues 32-68; that stretch reads TLGATPGSTSTSTSTSTATTTTLESTSTSTSGDATET. Residues 32-71 are disordered; the sequence is TLGATPGSTSTSTSTSTATTTTLESTSTSTSGDATETTIK. [4Fe-4S] cluster-binding residues include Cys150, Cys155, Cys161, Cys180, Cys184, Cys187, and Ser395. The Radical SAM core domain occupies 165-384; the sequence is KKSEATATIM…RDVALEMGFL (220 aa).

The protein belongs to the radical SAM superfamily. Lipoyl synthase family. [4Fe-4S] cluster serves as cofactor.

The protein localises to the mitochondrion. It carries out the reaction [[Fe-S] cluster scaffold protein carrying a second [4Fe-4S](2+) cluster] + N(6)-octanoyl-L-lysyl-[protein] + 2 oxidized [2Fe-2S]-[ferredoxin] + 2 S-adenosyl-L-methionine + 4 H(+) = [[Fe-S] cluster scaffold protein] + N(6)-[(R)-dihydrolipoyl]-L-lysyl-[protein] + 4 Fe(3+) + 2 hydrogen sulfide + 2 5'-deoxyadenosine + 2 L-methionine + 2 reduced [2Fe-2S]-[ferredoxin]. Its pathway is protein modification; protein lipoylation via endogenous pathway; protein N(6)-(lipoyl)lysine from octanoyl-[acyl-carrier-protein]: step 2/2. Its function is as follows. Catalyzes the radical-mediated insertion of two sulfur atoms into the C-6 and C-8 positions of the octanoyl moiety bound to the lipoyl domains of lipoate-dependent enzymes, thereby converting the octanoylated domains into lipoylated derivatives. The polypeptide is Lipoyl synthase, mitochondrial (Lodderomyces elongisporus (strain ATCC 11503 / CBS 2605 / JCM 1781 / NBRC 1676 / NRRL YB-4239) (Yeast)).